Consider the following 1214-residue polypeptide: Sodium bicarbonate cotransporter 3 (1214 aa).

Over residues Met-1–Gly-12 the composition is skewed to basic and acidic residues. Disordered regions lie at residues Met-1–Gly-22 and Ser-52–Arg-93. Over Met-1–Cys-608 the chain is Extracellular. Phosphoserine occurs at positions 52, 55, 84, 150, 165, and 168. A compositionally biased stretch (basic residues) spans Ser-55–Lys-72. A compositionally biased stretch (basic and acidic residues) spans Asp-73–Pro-85. Asn-171 carries an N-linked (GlcNAc...) asparagine glycan. A phosphoserine mark is found at Ser-233, Ser-242, Ser-255, Arg-258, Ser-260, Thr-263, Gly-264, and Ala-267. N-linked (GlcNAc...) asparagine glycosylation occurs at Asn-269. Disordered regions lie at residues Ser-289–Val-346, Glu-362–Thr-408, and Phe-552–Gly-572. Residues Val-303–Ser-313 are compositionally biased toward pro residues. Positions Pro-314–Pro-332 are enriched in low complexity. Residues Ser-379–Ser-392 show a composition bias toward polar residues. At Ser-382 the chain carries Phosphoserine. Residue Asn-398 is glycosylated (N-linked (GlcNAc...) asparagine). Phosphoserine is present on residues Ser-400 and Ser-403. Asn-406 carries an N-linked (GlcNAc...) asparagine glycan. A phosphoserine mark is found at Ser-407 and Ser-556. Phosphothreonine is present on Thr-557. Basic and acidic residues predominate over residues Thr-563–Gly-572. A helical membrane pass occupies residues Leu-609–Leu-629. The Cytoplasmic portion of the chain corresponds to Leu-630–Arg-637. The chain crosses the membrane as a helical span at residues Ile-638–Ala-658. The Extracellular segment spans residues Gly-659 to Ser-695. The helical transmembrane segment at Ile-696–Val-716 threads the bilayer. At Cys-717–Glu-725 the chain is on the cytoplasmic side. Residues Ala-726–Leu-746 form a helical membrane-spanning segment. At Lys-742 the chain carries Phosphoserine. Residues Gly-747–His-817 lie on the Extracellular side of the membrane. Cysteines 766 and 768 form a disulfide. 2 positions are modified to phosphoserine: Pro-771 and Pro-774. N-linked (GlcNAc...) asparagine glycosylation is present at Asn-776. Position 780 is a phosphoserine (Ala-780). Asn-786 and Asn-791 each carry an N-linked (GlcNAc...) asparagine glycan. A disulfide bond links Cys-802 and Cys-814. The helical transmembrane segment at Gly-818–Leu-838 threads the bilayer. Residues Ser-839–Asp-861 lie on the Cytoplasmic side of the membrane. A helical transmembrane segment spans residues Phe-862–Ser-882. The Extracellular segment spans residues Pro-883 to Asn-908. A helical transmembrane segment spans residues Pro-909 to Met-929. At Asp-930–Asp-954 the chain is on the cytoplasmic side. Residues Leu-955–Ala-975 form a helical membrane-spanning segment. At Ala-976–Thr-1011 the chain is on the extracellular side. Phosphoserine occurs at positions 1007, 1010, and 1016. Essential for cell membrane localization and transport activity regions lie at residues Gln-1008–Leu-1131 and Thr-1127–Leu-1214. A helical membrane pass occupies residues Gly-1012–Ile-1032. Residues Pro-1033–Met-1034 are Cytoplasmic-facing. Residues Pro-1035–Phe-1055 form a helical membrane-spanning segment. Residues Asp-1056 to Cys-1092 lie on the Extracellular side of the membrane. Tyr-1073, Val-1077, Ser-1102, Ala-1105, Val-1106, Pro-1109, Met-1111, and Leu-1115 each carry phosphoserine. The helical transmembrane segment at Leu-1093–Leu-1113 threads the bilayer. Over Ala-1114 to Leu-1214 the chain is Cytoplasmic. A CA2-binding region spans residues Leu-1134–Asp-1136. A compositionally biased stretch (basic and acidic residues) spans Lys-1144 to Gln-1162. Residues Lys-1144–His-1169 are disordered. At Thr-1167 the chain carries Phosphothreonine. 4 positions are modified to phosphoserine: Ser-1176, Ser-1188, Asp-1201, and Ser-1213. Positions Glu-1211 to Leu-1214 match the PDZ-binding motif.

It belongs to the anion exchanger (TC 2.A.31) family. Interacts with CFTR through NHERF1/EBP50. Interacts with USH1C. Forms a complex with ATP6V1B1 and NHERF1/EBP50. Interacts in a pH dependent-manner with CA2/carbonic anhydrase 2. Highly expressed in testis and spleen. Also expressed in retina, colon, small intestine, ovary, thymus, prostate, muscle, heart and kidney. As to expression, expressed in skeletal muscle and heart muscle.

Its subcellular location is the basolateral cell membrane. The protein localises to the apical cell membrane. It is found in the cell projection. The protein resides in the stereocilium. It localises to the cell membrane. It carries out the reaction hydrogencarbonate(in) + Na(+)(in) = hydrogencarbonate(out) + Na(+)(out). With respect to regulation, transporter activity is regulated by CA2/carbonic anhydrase 2, cAMP and PKA. Insensitive to stilbene derivatives. Inhibited by 5-(N-ethyl-N-isopropyl)-amiloride (EIPA). Electroneutral sodium- and bicarbonate-dependent cotransporter with a Na(+):HCO3(-) 1:1 stoichiometry. Mediates the sodium-dependent bicarbonate transport important for pH recovery after acid load as well as for regulation of steady-state pH in the duodenum and vascular smooth muscle cells. Plays a key role in macrophage acidification, mediating bicarbonate import into the cytoplasm which is crucial for net acid extrusion and maintenance of cytoplasmic pH during phagocytosis. Provides cellular bicarbonate for de novo purine and pyrimidine synthesis and is a key mediator of de novo nucleotide synthesis downstream of mTORC1 signaling in proliferating cells. In terms of biological role, plays a key role in macrophage acidification, mediating bicarbonate import into the cytoplasm which is crucial for net acid extrusion and maintenance of cytoplasmic pH during phagocytosis. The protein is Sodium bicarbonate cotransporter 3 (SLC4A7) of Homo sapiens (Human).